The primary structure comprises 288 residues: Histone H3-like centromeric protein hcp-3 (288 aa).

The disordered stretch occupies residues 96–194; sequence YHARKEQARR…VTKTRRYRPG (99 aa). A compositionally biased stretch (basic residues) spans 178 to 193; sequence MRAGRNRVTKTRRYRP. The segment at 191–288 is H3-like; sequence YRPGQKALEE…LYRRLCLRHL (98 aa).

Belongs to the histone H3 family. Forms a nucleosome-like histone octamer containing two molecules each of H2A, H2B, hcp-3 and H4 assembled in one hcp-3-H4 heterotetramer and two H2A-H2B heterodimers. The hcp-3-H4 heterotetramer is more compact and structurally more rigid than corresponding H3-H4 heterotetramers. Interacts with knl-2. Interacts with lin-53.

It localises to the nucleus. It is found in the chromosome. Its subcellular location is the centromere. The protein localises to the kinetochore. Histone H3-like variant which exclusively replaces conventional H3 in the nucleosome core of centromeric chromatin at the inner plate of the kinetochore. Required for recruitment and assembly of kinetochore proteins, mitotic progression and chromosome segregation. May serve as an epigenetic mark that propagates centromere identity through replication and cell division. Might promote cleavage furrow stability during cytokinesis. Not required for chromosome segregation during meiosis. The polypeptide is Histone H3-like centromeric protein hcp-3 (Caenorhabditis elegans).